We begin with the raw amino-acid sequence, 550 residues long: MAAKDVKFGNDARIKMLRGVNILADAVKVTLGPKGRNVVLDKSFGSPTITKDGVSVAREIELEDKFENMGAQMVKEVASKANDAAGDGTTTATVLAQSIITEGLKAVAAGMNPMDLKRGIDKAVIAAVEELKKLSVPCSDSKAIAQVGTISANSDSTVGELIAQAMEKVGKEGVITVEEGSGLQDELDVVEGMQFDRGYLSPYFINKPETGSIELESPFILLADKKISNIREMLPVLEAVAKAGKPLLIIAEDVEGEALATLVVNTMRGIVKVAAVKAPGFGDRRKAMLQDIATLTAGTVISEEIGLELEKTTLEDLGQAKRVVINKDTTIIIDGVGDEAAIQGRVAQIRQQIEEATSDYDKEKLQERVAKLAGGVAVIKVGAATEVEMKEKKARVEDALHATRAAVEEGVVAGGGVALIRAASAITAAGLKGDNEDQNVGIKVALRAMESPLRQIVVNAGEEASVIANNVKAGSGSYGYNAYSEEYGDMIAMGILDPTKVTRSALQYAASIAGLMITTECMITDLPRDDKGADMGAGGMGGMGGMGGMM.

ATP is bound by residues 30–33 (TLGP), Lys51, 87–91 (DGTTT), Gly415, and Asp497.

This sequence belongs to the chaperonin (HSP60) family. As to quaternary structure, forms a cylinder of 14 subunits composed of two heptameric rings stacked back-to-back. Interacts with the co-chaperonin GroES.

It is found in the cytoplasm. The enzyme catalyses ATP + H2O + a folded polypeptide = ADP + phosphate + an unfolded polypeptide.. Functionally, together with its co-chaperonin GroES, plays an essential role in assisting protein folding. The GroEL-GroES system forms a nano-cage that allows encapsulation of the non-native substrate proteins and provides a physical environment optimized to promote and accelerate protein folding. This is Chaperonin GroEL from Yersinia enterocolitica.